We begin with the raw amino-acid sequence, 101 residues long: Small ribosomal subunit protein uS14 (101 aa).

The interval 51-72 is disordered; the sequence is LPRDSSPSRQRNPCRQTGRPHG. Residues 52-65 show a composition bias toward polar residues; the sequence is PRDSSPSRQRNPCR.

It belongs to the universal ribosomal protein uS14 family. Part of the 30S ribosomal subunit. Contacts proteins S3 and S10.

Its function is as follows. Binds 16S rRNA, required for the assembly of 30S particles and may also be responsible for determining the conformation of the 16S rRNA at the A site. This Buchnera aphidicola subsp. Acyrthosiphon kondoi (Acyrthosiphon kondoi symbiotic bacterium) protein is Small ribosomal subunit protein uS14.